Here is a 71-residue protein sequence, read N- to C-terminus: Large ribosomal subunit protein uL30 (71 aa).

The protein belongs to the universal ribosomal protein uL30 family. As to quaternary structure, part of the 50S ribosomal subunit.

The protein is Large ribosomal subunit protein uL30 of Mycobacterium leprae (strain TN).